The primary structure comprises 645 residues: Threonine--tRNA ligase (645 aa).

In terms of domain architecture, TGS spans Met-1–Thr-61. The segment at Asp-243–Pro-536 is catalytic. Cys-336, His-387, and His-513 together coordinate Zn(2+).

The protein belongs to the class-II aminoacyl-tRNA synthetase family. In terms of assembly, homodimer. Requires Zn(2+) as cofactor.

Its subcellular location is the cytoplasm. It carries out the reaction tRNA(Thr) + L-threonine + ATP = L-threonyl-tRNA(Thr) + AMP + diphosphate + H(+). Catalyzes the attachment of threonine to tRNA(Thr) in a two-step reaction: L-threonine is first activated by ATP to form Thr-AMP and then transferred to the acceptor end of tRNA(Thr). Also edits incorrectly charged L-seryl-tRNA(Thr). The polypeptide is Threonine--tRNA ligase (Gluconobacter oxydans (strain 621H) (Gluconobacter suboxydans)).